Here is a 313-residue protein sequence, read N- to C-terminus: Esterase mpl1 (313 aa).

Residues Ser-174, Asp-259, and His-287 each act as charge relay system in the active site.

Belongs to the LovG family.

The protein operates within mycotoxin biosynthesis. Functionally, esterase; part of the gene cluster that mediates the biosynthesis of the mycotoxin citrinin, a hepato-nephrotoxic compound to humans due to inhibition of respiration complex III. The pathway begins with the synthesis of a keto-aldehyde intermediate by the citrinin PKS (pksCT) from successive condensations of 4 malonyl-CoA units, presumably with a simple acetyl-CoA starter unit. Release of the keto-aldehyde intermediate is consistent with the presence of the C-terminal reductive release domain. Mp11 collaborates with pksCT by catalyzing the hydrolysis of ACP-bound acyl intermediates to free the ACP from stalled intermediates. Mpl2 then catalyzes the oxidation of the C-12 methyl of the ketone intermediate to an alcohol intermediate which is further oxidized by the oxidoreductase mpl7 to produce a bisaldehyde intermediate. The fourth catalytic step is catalyzed by the mpl4 aldehyde dehydrogenase. The final transformation is the reduction of C-3 by mpl6 to provide the chemically stable citrinin nucleus. In Monascus purpureus (Red mold), this protein is Esterase mpl1.